We begin with the raw amino-acid sequence, 633 residues long: Chaperone protein HtpG (633 aa).

The tract at residues 1–344 (MSLQPQAETL…SNDLPLNISR (344 aa)) is a; substrate-binding. A b region spans residues 345-560 (ELLQSNEVIN…ENEMSGHLQR (216 aa)). The interval 561–633 (LLIQTGQDFM…KGLNELLLDS (73 aa)) is c.

This sequence belongs to the heat shock protein 90 family. Homodimer.

It is found in the cytoplasm. Functionally, molecular chaperone. Has ATPase activity. In Coxiella burnetii (strain RSA 331 / Henzerling II), this protein is Chaperone protein HtpG.